The following is a 227-amino-acid chain: Pre-hexon-linking protein VIII (227 aa).

Thr64 is subject to Phosphothreonine; by host. Residues 112–157 constitute a propeptide that is removed on maturation; that stretch reads FRHRVRSPGQGITHLKIRGRGIQLNDESVSSSLGLRPDGTFQIGGA. Phosphoserine; by host occurs at positions 118 and 174.

This sequence belongs to the adenoviridae hexon-linking protein family. Interacts with the peripentonal hexons as well as the hexons in the facets. Part of a complex composed of the core-capsid bridging protein, the endosome lysis protein VI and the hexon-linking protein VIII; these interactions bridge the virus core to the capsid. In terms of processing, cleaved by the viral protease during virion maturation. May cause the middle segment to be shed from the capsid.

Its subcellular location is the virion. It localises to the host nucleus. Its function is as follows. Structural component of the virion that acts as a cement protein on the capsid interior and which glue the peripentonal hexons and group-of-nine hexons together. This Homo sapiens (Human) protein is Pre-hexon-linking protein VIII.